The primary structure comprises 369 residues: Type 2 DNA topoisomerase 6 subunit A (369 aa).

A Topo IIA-type catalytic domain is found at 11–149 (QRDLLAREKL…FHMRPEEDGA (139 aa)). The active-site O-(5'-phospho-DNA)-tyrosine intermediate is Y106. Positions 202 and 254 each coordinate Mg(2+).

This sequence belongs to the TOP6A family. As to quaternary structure, homodimer. Heterotetramer of two Top6A and two Top6B chains. Mg(2+) serves as cofactor.

It carries out the reaction ATP-dependent breakage, passage and rejoining of double-stranded DNA.. Relaxes both positive and negative superturns and exhibits a strong decatenase activity. This Methanosarcina barkeri (strain Fusaro / DSM 804) protein is Type 2 DNA topoisomerase 6 subunit A.